The following is a 254-amino-acid chain: 3-deoxy-manno-octulosonate cytidylyltransferase (254 aa).

The protein belongs to the KdsB family.

The protein resides in the cytoplasm. It carries out the reaction 3-deoxy-alpha-D-manno-oct-2-ulosonate + CTP = CMP-3-deoxy-beta-D-manno-octulosonate + diphosphate. The protein operates within nucleotide-sugar biosynthesis; CMP-3-deoxy-D-manno-octulosonate biosynthesis; CMP-3-deoxy-D-manno-octulosonate from 3-deoxy-D-manno-octulosonate and CTP: step 1/1. Its pathway is bacterial outer membrane biogenesis; lipopolysaccharide biosynthesis. Its function is as follows. Activates KDO (a required 8-carbon sugar) for incorporation into bacterial lipopolysaccharide in Gram-negative bacteria. The polypeptide is 3-deoxy-manno-octulosonate cytidylyltransferase (Haemophilus influenzae (strain 86-028NP)).